A 963-amino-acid polypeptide reads, in one-letter code: Translation initiation factor IF-2 (963 aa).

Over residues 53–77 (SHGQADDSARKKITLTKRETSEIRQ) the composition is skewed to basic and acidic residues. Residues 53–377 (SHGQADDSAR…RSNFQAPTEP (325 aa)) form a disordered region. The segment covering 78–87 (SDATGKTRTV) has biased composition (polar residues). Composition is skewed to basic and acidic residues over residues 98 to 110 (IKRDDAAPEHQAD), 123 to 183 (EEAR…KAEE), 197 to 250 (DTSR…EAEA), and 267 to 278 (PSERKAEEKKAE). Residues 343–356 (SSGGVGGWRGGPRG) are compositionally biased toward gly residues. Residues 463–632 (PRPPVVTVMG…SLQAEVLELK (170 aa)) enclose the tr-type G domain. The interval 472–479 (GHVDHGKT) is G1. Residue 472–479 (GHVDHGKT) coordinates GTP. The G2 stretch occupies residues 497–501 (GITQH). The segment at 518–521 (DTPG) is G3. GTP is bound by residues 518–522 (DTPGH) and 572–575 (NKVD). Positions 572–575 (NKVD) are G4. The segment at 608 to 610 (SAK) is G5.

Belongs to the TRAFAC class translation factor GTPase superfamily. Classic translation factor GTPase family. IF-2 subfamily.

The protein localises to the cytoplasm. Functionally, one of the essential components for the initiation of protein synthesis. Protects formylmethionyl-tRNA from spontaneous hydrolysis and promotes its binding to the 30S ribosomal subunits. Also involved in the hydrolysis of GTP during the formation of the 70S ribosomal complex. This Cupriavidus taiwanensis (strain DSM 17343 / BCRC 17206 / CCUG 44338 / CIP 107171 / LMG 19424 / R1) (Ralstonia taiwanensis (strain LMG 19424)) protein is Translation initiation factor IF-2.